The sequence spans 345 residues: Dimethyladenosine transferase 1, mitochondrial (345 aa).

A mitochondrion-targeting transit peptide spans 1 to 27; that stretch reads MAASGKLGTFRLPPLPTIREIIKLFGL. S-adenosyl-L-methionine contacts are provided by residues 35–38, Asn-36, Leu-38, Gly-63, Glu-85, Asp-111, and Asn-141; that span reads QNFL.

It belongs to the class I-like SAM-binding methyltransferase superfamily. rRNA adenine N(6)-methyltransferase family. KsgA subfamily. Interacts with mitochondrial RNA polymerase POLRMT. Interacts with TFAM.

Its subcellular location is the mitochondrion. In terms of biological role, S-adenosyl-L-methionine-dependent methyltransferase which specifically dimethylates mitochondrial 12S rRNA at the conserved stem loop. Also required for basal transcription of mitochondrial DNA, probably via its interaction with POLRMT and TFAM. Stimulates transcription independently of the methyltransferase activity. This is Dimethyladenosine transferase 1, mitochondrial (Tfb1m) from Rattus norvegicus (Rat).